We begin with the raw amino-acid sequence, 220 residues long: Guanylate kinase (220 aa).

The Guanylate kinase-like domain maps to Gly-15 to Lys-194. Residue Ser-22–Ser-29 participates in ATP binding.

It belongs to the guanylate kinase family.

The protein resides in the cytoplasm. The enzyme catalyses GMP + ATP = GDP + ADP. Functionally, essential for recycling GMP and indirectly, cGMP. The polypeptide is Guanylate kinase (Rhizobium etli (strain ATCC 51251 / DSM 11541 / JCM 21823 / NBRC 15573 / CFN 42)).